A 1497-amino-acid chain; its full sequence is ABC multidrug transporter C (1497 aa).

Residues 1-13 (MSLLGTINPNINP) are compositionally biased toward polar residues. A disordered region spans residues 1 to 21 (MSLLGTINPNINPERTVAGRG). Residues Asn137 and Asn336 are each glycosylated (N-linked (GlcNAc...) asparagine). The ABC transporter 1 domain occupies 158–412 (LEVGTLVRRI…FTNMGFECPE (255 aa)). 5 helical membrane-spanning segments follow: residues 523 to 543 (LTMSQLIGNFIMALVIGSVFY), 557 to 577 (ALLFFAVLLNAFSSALEILTL), 599 to 621 (AIASMLCDMPYKITNAIIFNLTL), 632 to 652 (GAFFVFLLFSFVTTLTMSMLF), and 665 to 685 (ALVPAAILILGLVIYTGFTIP). Residue Asn762 is glycosylated (N-linked (GlcNAc...) asparagine). The chain crosses the membrane as a helical span at residues 777 to 797 (GIMFGFMFFFMFTYLTATEYI). Residues 815–843 (QPTGSHDVEKSPEVSSAAKTDEASSKEAT) are disordered. One can recognise an ABC transporter 2 domain in the interval 853 to 1096 (FQWKDVCYDI…LASYFERNGA (244 aa)). An ATP-binding site is contributed by 889–896 (GVSGAGKT). A run of 5 helical transmembrane segments spans residues 1192 to 1212 (YIYSKTALCVLTALYIGFSFF), 1226 to 1246 (FSIFMLMTIFGNLVQQIMPNF), 1273 to 1293 (IIVELPWNTLMAFLIFVCWYY), 1313 to 1333 (LMFLLIWSFLLFTSTFAHMMI), and 1352 to 1372 (LCLIFCGVLAPPQSLPGFWIF). N-linked (GlcNAc...) asparagine glycosylation is present at Asn1411. Residues 1464 to 1484 (FGIMWAYIIFNIFAAVFIYWL) traverse the membrane as a helical segment.

It belongs to the ABC transporter superfamily. ABCG family. PDR (TC 3.A.1.205) subfamily.

Its subcellular location is the cell membrane. It carries out the reaction fluconazole(in) + ATP + H2O = fluconazole(out) + ADP + phosphate + H(+). The catalysed reaction is itraconazole(in) + ATP + H2O = itraconazole(out) + ADP + phosphate + H(+). The enzyme catalyses voriconazole(in) + ATP + H2O = voriconazole(out) + ADP + phosphate + H(+). With respect to regulation, the efflux inhibitor FK506 impairs the transport activity. In terms of biological role, pleiotropic ABC efflux transporter that shows a strong substrate specificity for the azole class of drugs such as lotrimazole (CLT), fluconazole (FLC), itraconazole (ITC), ketoconazole (KTC), posaconazole (POS), tebuconazole (TEBZ), and voriconazole (VRC). Is also able to transport rhodamine 6G (R-6G), a known substrate for many ABC transporters. Required for normal pathogenesis in a Galleria mellonella (greater wax moth) infection model. This chain is ABC multidrug transporter C, found in Aspergillus fumigatus (strain ATCC MYA-4609 / CBS 101355 / FGSC A1100 / Af293) (Neosartorya fumigata).